Reading from the N-terminus, the 89-residue chain is Small ribosomal subunit protein uS15 (89 aa).

This sequence belongs to the universal ribosomal protein uS15 family. As to quaternary structure, part of the 30S ribosomal subunit. Forms a bridge to the 50S subunit in the 70S ribosome, contacting the 23S rRNA.

Its function is as follows. One of the primary rRNA binding proteins, it binds directly to 16S rRNA where it helps nucleate assembly of the platform of the 30S subunit by binding and bridging several RNA helices of the 16S rRNA. Functionally, forms an intersubunit bridge (bridge B4) with the 23S rRNA of the 50S subunit in the ribosome. The sequence is that of Small ribosomal subunit protein uS15 from Gloeothece citriformis (strain PCC 7424) (Cyanothece sp. (strain PCC 7424)).